We begin with the raw amino-acid sequence, 219 residues long: Probable GTP-binding protein EngB (219 aa).

The region spanning 40 to 212 is the EngB-type G domain; sequence LLPEIAFIGK…KASLAKCIIK (173 aa). Residues 48 to 55, 75 to 79, 93 to 96, 160 to 163, and 191 to 193 contribute to the GTP site; these read GKSNVGKS, GRTGQ, DLPG, TKFD, and VSS. Residues Ser-55 and Thr-77 each contribute to the Mg(2+) site.

This sequence belongs to the TRAFAC class TrmE-Era-EngA-EngB-Septin-like GTPase superfamily. EngB GTPase family. Requires Mg(2+) as cofactor.

In terms of biological role, necessary for normal cell division and for the maintenance of normal septation. This is Probable GTP-binding protein EngB from Rickettsia canadensis (strain McKiel).